The sequence spans 256 residues: Na(+)-translocating NADH-quinone reductase subunit C (256 aa).

A helical membrane pass occupies residues 12-32 (LGVVIGLSLVCSIIVSTAAVG). FMN phosphoryl threonine is present on T224.

This sequence belongs to the NqrC family. As to quaternary structure, composed of six subunits; NqrA, NqrB, NqrC, NqrD, NqrE and NqrF. The cofactor is FMN.

The protein resides in the cell inner membrane. The enzyme catalyses a ubiquinone + n Na(+)(in) + NADH + H(+) = a ubiquinol + n Na(+)(out) + NAD(+). Its activity is regulated as follows. This reaction is tightly coupled to the Na(+) pumping activity and specifically requires Na(+) for activity. Inhibited by korormicin and 2-N-heptyl-4-hydroxyquinoline N-oxide (HQNO). NQR complex catalyzes the reduction of ubiquinone-1 to ubiquinol by two successive reactions, coupled with the transport of Na(+) ions from the cytoplasm to the periplasm. NqrA to NqrE are probably involved in the second step, the conversion of ubisemiquinone to ubiquinol. The chain is Na(+)-translocating NADH-quinone reductase subunit C from Vibrio alginolyticus.